The sequence spans 265 residues: 3-methyl-2-oxobutanoate hydroxymethyltransferase (265 aa).

Residues Asp-41 and Asp-80 each contribute to the Mg(2+) site. 3-methyl-2-oxobutanoate-binding positions include 41-42, Asp-80, and Lys-110; that span reads DS. Residue Glu-112 participates in Mg(2+) binding. Glu-179 serves as the catalytic Proton acceptor.

The protein belongs to the PanB family. In terms of assembly, homodecamer; pentamer of dimers. Mg(2+) is required as a cofactor.

It is found in the cytoplasm. The catalysed reaction is 3-methyl-2-oxobutanoate + (6R)-5,10-methylene-5,6,7,8-tetrahydrofolate + H2O = 2-dehydropantoate + (6S)-5,6,7,8-tetrahydrofolate. It functions in the pathway cofactor biosynthesis; (R)-pantothenate biosynthesis; (R)-pantoate from 3-methyl-2-oxobutanoate: step 1/2. In terms of biological role, catalyzes the reversible reaction in which hydroxymethyl group from 5,10-methylenetetrahydrofolate is transferred onto alpha-ketoisovalerate to form ketopantoate. The protein is 3-methyl-2-oxobutanoate hydroxymethyltransferase of Pseudothermotoga lettingae (strain ATCC BAA-301 / DSM 14385 / NBRC 107922 / TMO) (Thermotoga lettingae).